The sequence spans 200 residues: dITP/XTP pyrophosphatase (200 aa).

Substrate is bound at residue 7–12 (TQNKRK). Mg(2+)-binding residues include glutamate 42 and aspartate 71. The Proton acceptor role is filled by aspartate 71. Substrate contacts are provided by residues serine 72, 156-159 (FGYD), lysine 179, and 184-185 (HR).

The protein belongs to the HAM1 NTPase family. Homodimer. It depends on Mg(2+) as a cofactor.

The catalysed reaction is XTP + H2O = XMP + diphosphate + H(+). It catalyses the reaction dITP + H2O = dIMP + diphosphate + H(+). The enzyme catalyses ITP + H2O = IMP + diphosphate + H(+). Its function is as follows. Pyrophosphatase that catalyzes the hydrolysis of nucleoside triphosphates to their monophosphate derivatives, with a high preference for the non-canonical purine nucleotides XTP (xanthosine triphosphate), dITP (deoxyinosine triphosphate) and ITP. Seems to function as a house-cleaning enzyme that removes non-canonical purine nucleotides from the nucleotide pool, thus preventing their incorporation into DNA/RNA and avoiding chromosomal lesions. The protein is dITP/XTP pyrophosphatase of Malacoplasma penetrans (strain HF-2) (Mycoplasma penetrans).